Here is a 413-residue protein sequence, read N- to C-terminus: Serine hydroxymethyltransferase (413 aa).

Residues Leu119 and 123–125 (GHL) each bind (6S)-5,6,7,8-tetrahydrofolate. Position 228 is an N6-(pyridoxal phosphate)lysine (Lys228). 351–353 (SPF) contacts (6S)-5,6,7,8-tetrahydrofolate.

Belongs to the SHMT family. In terms of assembly, homodimer. The cofactor is pyridoxal 5'-phosphate.

The protein resides in the cytoplasm. It carries out the reaction (6R)-5,10-methylene-5,6,7,8-tetrahydrofolate + glycine + H2O = (6S)-5,6,7,8-tetrahydrofolate + L-serine. It functions in the pathway one-carbon metabolism; tetrahydrofolate interconversion. Its pathway is amino-acid biosynthesis; glycine biosynthesis; glycine from L-serine: step 1/1. Catalyzes the reversible interconversion of serine and glycine with tetrahydrofolate (THF) serving as the one-carbon carrier. This reaction serves as the major source of one-carbon groups required for the biosynthesis of purines, thymidylate, methionine, and other important biomolecules. Also exhibits THF-independent aldolase activity toward beta-hydroxyamino acids, producing glycine and aldehydes, via a retro-aldol mechanism. The chain is Serine hydroxymethyltransferase from Anoxybacillus flavithermus (strain DSM 21510 / WK1).